The following is a 223-amino-acid chain: MSDRPTQGLTWGPRRDFYNESGSQKIIRKLKEEPLVPIGCILTIAAFTNAYRAMRRGDHHKVQRMFRARVAAQGFTVLAMVGGGMYYAEDRNKRKELGKLKQQQEAEEKRQKWIRELEARDEEEKALQEMMDKKRKRASERTMRAETGSEGIAAQARAAFKDKANKGEAAGAEKTEAPSQRADNEKKPAGSGFLGGWFGGSSKTPETPAKDTKGKNLDSESSS.

Residues 7–98 (QGLTWGPRRD…EDRNKRKELG (92 aa)) form the HIG1 domain. The next 2 membrane-spanning stretches (helical) occupy residues 34-53 (PLVP…AYRA) and 66-88 (FRAR…MYYA). Residues 87–139 (YAEDRNKRKELGKLKQQQEAEEKRQKWIRELEARDEEEKALQEMMDKKRKRAS) are a coiled coil. Composition is skewed to basic and acidic residues over residues 121–132 (DEEEKALQEMMD), 159–188 (AFKD…EKKP), and 208–223 (PAKD…ESSS). The segment at 121–223 (DEEEKALQEM…GKNLDSESSS (103 aa)) is disordered.

Belongs to the RCF1 family. In terms of assembly, associates with the respiratory chain complex III/complex IV supercomplex.

The protein resides in the mitochondrion membrane. Its function is as follows. Cytochrome c oxidase subunit which plays a role in assembly of respiratory supercomplexes. This chain is Respiratory supercomplex factor 1, mitochondrial (RCF1), found in Chaetomium globosum (strain ATCC 6205 / CBS 148.51 / DSM 1962 / NBRC 6347 / NRRL 1970) (Soil fungus).